Reading from the N-terminus, the 194-residue chain is HTH-type transcriptional regulator BetI (194 aa).

One can recognise an HTH tetR-type domain in the interval 8–68 (EIRRAQLIDA…ATMRHVLRDL (61 aa)). The H-T-H motif DNA-binding region spans 31 to 50 (TLASVAQRANISTGIVSHYF).

It participates in amine and polyamine biosynthesis; betaine biosynthesis via choline pathway [regulation]. Its function is as follows. Repressor involved in the biosynthesis of the osmoprotectant glycine betaine. It represses transcription of the choline transporter BetT and the genes of BetAB involved in the synthesis of glycine betaine. The chain is HTH-type transcriptional regulator BetI from Burkholderia lata (strain ATCC 17760 / DSM 23089 / LMG 22485 / NCIMB 9086 / R18194 / 383).